We begin with the raw amino-acid sequence, 178 residues long: Large ribosomal subunit protein bL25 (178 aa).

Belongs to the bacterial ribosomal protein bL25 family. CTC subfamily. As to quaternary structure, part of the 50S ribosomal subunit; part of the 5S rRNA/L5/L18/L25 subcomplex. Contacts the 5S rRNA. Binds to the 5S rRNA independently of L5 and L18.

Functionally, this is one of the proteins that binds to the 5S RNA in the ribosome where it forms part of the central protuberance. The sequence is that of Large ribosomal subunit protein bL25 from Nitratiruptor sp. (strain SB155-2).